Reading from the N-terminus, the 438-residue chain is Transcriptional enhancer factor TEF-3 (438 aa).

Positions Met-1–Gly-18 are enriched in polar residues. Disordered stretches follow at residues Met-1–Ser-36 and Gln-195–Ala-217. The TEA DNA-binding region spans Asp-28–Glu-104. Over residues Ser-205–Pro-216 the composition is skewed to low complexity.

As to expression, enriched in cardiac and skeletal muscle.

The protein resides in the nucleus. Functionally, transcription factor which plays a key role in the Hippo signaling pathway, a pathway involved in organ size control and tumor suppression by restricting proliferation and promoting apoptosis. The core of this pathway is composed of a kinase cascade wherein MST1/MST2, in complex with its regulatory protein SAV1, phosphorylates and activates LATS1/2 in complex with its regulatory protein MOB1, which in turn phosphorylates and inactivates YAP1 oncoprotein and WWTR1/TAZ. Binds m-cat elements from muscle-specific promoters and differentially activate transcription. Isoform B has probably a transactivation capacity that is lacking in the other isoforms. Isoform D may be defective in DNA binding. The chain is Transcriptional enhancer factor TEF-3 (TEAD4) from Gallus gallus (Chicken).